A 170-amino-acid chain; its full sequence is Adenine phosphoribosyltransferase (170 aa).

Belongs to the purine/pyrimidine phosphoribosyltransferase family. Homodimer.

Its subcellular location is the cytoplasm. It catalyses the reaction AMP + diphosphate = 5-phospho-alpha-D-ribose 1-diphosphate + adenine. The protein operates within purine metabolism; AMP biosynthesis via salvage pathway; AMP from adenine: step 1/1. In terms of biological role, catalyzes a salvage reaction resulting in the formation of AMP, that is energically less costly than de novo synthesis. This is Adenine phosphoribosyltransferase from Bacillus mycoides (strain KBAB4) (Bacillus weihenstephanensis).